The primary structure comprises 349 residues: DNA-directed RNA polymerase subunit alpha (349 aa).

The segment at 1-226 is alpha N-terminal domain (alpha-NTD); sequence MLIAQRPTLI…GLFGLAQELN (226 aa). The tract at residues 241 to 349 is alpha C-terminal domain (alpha-CTD); it reads AALAADLALP…GAEFIETEQY (109 aa). Residues 309 to 349 are disordered; it reads KDSPPGFDPRQAVDTYGTDAYSPSFSDPSDDGAEFIETEQY. Acidic residues predominate over residues 336–349; the sequence is PSDDGAEFIETEQY.

Belongs to the RNA polymerase alpha chain family. In terms of assembly, homodimer. The RNAP catalytic core consists of 2 alpha, 1 beta, 1 beta' and 1 omega subunit. When a sigma factor is associated with the core the holoenzyme is formed, which can initiate transcription.

The enzyme catalyses RNA(n) + a ribonucleoside 5'-triphosphate = RNA(n+1) + diphosphate. Functionally, DNA-dependent RNA polymerase catalyzes the transcription of DNA into RNA using the four ribonucleoside triphosphates as substrates. In Frankia casuarinae (strain DSM 45818 / CECT 9043 / HFP020203 / CcI3), this protein is DNA-directed RNA polymerase subunit alpha.